A 478-amino-acid polypeptide reads, in one-letter code: DNA gyrase subunit B (478 aa).

Residues 319–438 (CEIYLVEGDS…GGHVYIAQPP (120 aa)) enclose the Toprim domain. Positions 325, 403, and 405 each coordinate Mg(2+).

It belongs to the type II topoisomerase GyrB family. Heterotetramer, composed of two GyrA and two GyrB chains. In the heterotetramer, GyrA contains the active site tyrosine that forms a transient covalent intermediate with DNA, while GyrB binds cofactors and catalyzes ATP hydrolysis. Requires Mg(2+) as cofactor. The cofactor is Mn(2+). Ca(2+) serves as cofactor.

The protein localises to the cytoplasm. The catalysed reaction is ATP-dependent breakage, passage and rejoining of double-stranded DNA.. In terms of biological role, a type II topoisomerase that negatively supercoils closed circular double-stranded (ds) DNA in an ATP-dependent manner to modulate DNA topology and maintain chromosomes in an underwound state. Negative supercoiling favors strand separation, and DNA replication, transcription, recombination and repair, all of which involve strand separation. Also able to catalyze the interconversion of other topological isomers of dsDNA rings, including catenanes and knotted rings. Type II topoisomerases break and join 2 DNA strands simultaneously in an ATP-dependent manner. The chain is DNA gyrase subunit B (gyrB) from Cytophaga aurantiaca.